A 651-amino-acid polypeptide reads, in one-letter code: Beta-mannosyltransferase 7 (651 aa).

Residues 1–19 (MKLEMSSYLHKVPNTGITN) are Cytoplasmic-facing. A helical membrane pass occupies residues 20–42 (LSNSKSIVFIMFCATLLFIITSS). Over 43-651 (RYLTGSESLG…VKIDEKSEET (609 aa)) the chain is Extracellular. Residues asparagine 271 and asparagine 423 are each glycosylated (N-linked (GlcNAc...) asparagine).

The protein belongs to the BMT family.

Its subcellular location is the membrane. Beta-mannosyltransferase involved in cell wall biosynthesis through beta-1,2-mannosylation of cell wall phosphopeptidomannan. The polypeptide is Beta-mannosyltransferase 7 (BMT7) (Candida albicans (strain SC5314 / ATCC MYA-2876) (Yeast)).